A 319-amino-acid chain; its full sequence is Solute carrier family 25 member 34 (319 aa).

A disordered region spans residues 1–22 (MNSAFSGPSSPTPGPSPPRPPL). Pro residues predominate over residues 10 to 22 (SPTPGPSPPRPPL). Solcar repeat units follow at residues 22-115 (LWPP…MQAA), 119-212 (DGPC…AKDW), and 222-313 (LSSL…LRQR). The next 6 helical transmembrane spans lie at 25 to 45 (PLDF…TNPL), 63 to 83 (SYRR…RTDG), 116 to 138 (GVTD…GAFI), 188 to 209 (VNGA…FSSA), 224 to 244 (SLNT…IMTP), and 296 to 319 (LAPH…PYTH).

The protein belongs to the mitochondrial carrier (TC 2.A.29) family.

Its subcellular location is the mitochondrion inner membrane. This Danio rerio (Zebrafish) protein is Solute carrier family 25 member 34 (slc25a34).